We begin with the raw amino-acid sequence, 309 residues long: Mitochondrial glycine transporter (309 aa).

3 Solcar repeats span residues 2–94 (SNVG…LRAL), 124–207 (LTSQ…IKHE), and 219–304 (QATL…GLML). The next 6 membrane-spanning stretches (helical) occupy residues 8 to 33 (LLSG…TRLQ), 69 to 95 (GTTP…RALM), 130 to 155 (LIAG…ARFE), 182 to 205 (GFLA…EGIK), 223 to 249 (IHGL…KTKI), and 279 to 297 (GASL…GWAV).

The protein belongs to the mitochondrial carrier (TC 2.A.29) family. SLC25A38 subfamily.

The protein resides in the mitochondrion inner membrane. It carries out the reaction glycine(in) = glycine(out). Functionally, mitochondrial glycine transporter that imports glycine into the mitochondrial matrix. Plays an important role in providing glycine for the first enzymatic step in heme biosynthesis, the condensation of glycine with succinyl-CoA to produce 5-aminolevulinate (ALA) in the mitochondrial matrix. The chain is Mitochondrial glycine transporter from Laccaria bicolor (strain S238N-H82 / ATCC MYA-4686) (Bicoloured deceiver).